Here is a 167-residue protein sequence, read N- to C-terminus: Lipoprotein signal peptidase (167 aa).

3 helical membrane passes run 9 to 29, 68 to 88, and 98 to 118; these read AWLY…TKNL, LPLL…YALY, and MGLI…LGMV. Residues Asp120 and Asp138 contribute to the active site. The chain crosses the membrane as a helical span at residues 130-150; the sequence is YWPAFNIADASISIGIALLIL.

The protein belongs to the peptidase A8 family.

It localises to the cell inner membrane. It carries out the reaction Release of signal peptides from bacterial membrane prolipoproteins. Hydrolyzes -Xaa-Yaa-Zaa-|-(S,diacylglyceryl)Cys-, in which Xaa is hydrophobic (preferably Leu), and Yaa (Ala or Ser) and Zaa (Gly or Ala) have small, neutral side chains.. It functions in the pathway protein modification; lipoprotein biosynthesis (signal peptide cleavage). Functionally, this protein specifically catalyzes the removal of signal peptides from prolipoproteins. This chain is Lipoprotein signal peptidase, found in Aquifex aeolicus (strain VF5).